The sequence spans 135 residues: Large ribosomal subunit protein eL27y (135 aa).

The protein belongs to the eukaryotic ribosomal protein eL27 family.

The chain is Large ribosomal subunit protein eL27y (RPL27B) from Arabidopsis thaliana (Mouse-ear cress).